Here is a 170-residue protein sequence, read N- to C-terminus: Protein SprT (170 aa).

One can recognise a SprT-like domain in the interval 22–165; the sequence is LQLANQHLGT…RQCGEKLQFI (144 aa). His78 contacts Zn(2+). Glu79 is an active-site residue. His82 provides a ligand contact to Zn(2+).

This sequence belongs to the SprT family. Zn(2+) serves as cofactor.

Its subcellular location is the cytoplasm. In Yersinia pseudotuberculosis serotype IB (strain PB1/+), this protein is Protein SprT.